Here is a 601-residue protein sequence, read N- to C-terminus: MTTVPISNIRNFSIVAHIDHGKSTLADRLIQTTGGLQAREMKEQVLDSMDIERERGITIKAQTVRLNYHAQDGRDYIFNLMDTPGHVDFAYEVSRSLAACEGSLLVVDASQGVEAQTLANVYHALDAGHEIVPVLNKVDLPAAEPEQVRQQIEDVIGIDASEAVMISAKTGLGIDLVLEAIVHRLPPPQGDREAPLKALLVDSWYDVYLGVVVLVRVVDGVMKKGQRIRMMGTNAAYDLERVGFFTPKMTQVDELGPGEIGFITAGIKEVADTRVGDTITDDKKPVTEMLPGFKPAVPVVFCGLFPVDADDFETLRAAMGKLRLNDASFSFEMETSAALGFGFRCGFLGLLHLEIIQERLSREFDLNLIATAPSVIYKMHLTDGTELEIHNPIDMPDVVKIAEIQEPWIEATILTPDEYLGSVLKLCQDRRGTQKELTYVGSRAMVKYNLPLNEVVFDFYDRLKSVSKGYASFDYHLTDYQPADLVKMQILVNAEPVDALSMLVHRTRAEGRGRAMVEKMKELIPPHMFVIPIQAAIGGKIIARETVRALRKDVTAKCYGGDITRKRKLLEKQKEGKKKMRQFGKVDIPQEAFIAALKVDS.

In terms of domain architecture, tr-type G spans 7–189; sequence SNIRNFSIVA…AIVHRLPPPQ (183 aa). GTP-binding positions include 19-24 and 136-139; these read DHGKST and NKVD.

It belongs to the TRAFAC class translation factor GTPase superfamily. Classic translation factor GTPase family. LepA subfamily.

Its subcellular location is the cell inner membrane. The catalysed reaction is GTP + H2O = GDP + phosphate + H(+). Its function is as follows. Required for accurate and efficient protein synthesis under certain stress conditions. May act as a fidelity factor of the translation reaction, by catalyzing a one-codon backward translocation of tRNAs on improperly translocated ribosomes. Back-translocation proceeds from a post-translocation (POST) complex to a pre-translocation (PRE) complex, thus giving elongation factor G a second chance to translocate the tRNAs correctly. Binds to ribosomes in a GTP-dependent manner. The polypeptide is Elongation factor 4 (Rhodopseudomonas palustris (strain BisB18)).